A 264-amino-acid chain; its full sequence is Indole-3-glycerol phosphate synthase (264 aa).

The protein belongs to the TrpC family.

It catalyses the reaction 1-(2-carboxyphenylamino)-1-deoxy-D-ribulose 5-phosphate + H(+) = (1S,2R)-1-C-(indol-3-yl)glycerol 3-phosphate + CO2 + H2O. It participates in amino-acid biosynthesis; L-tryptophan biosynthesis; L-tryptophan from chorismate: step 4/5. This chain is Indole-3-glycerol phosphate synthase, found in Xylella fastidiosa (strain 9a5c).